A 318-amino-acid chain; its full sequence is Inactive dihydropteroate synthase 2 (318 aa).

The segment at 1 to 25 (MRSTPPASAGRSTPPALAGHSTPPA) is disordered. The 258-residue stretch at 42 to 299 (ALIMAIVNRT…EVAATRRVLE (258 aa)) folds into the Pterin-binding domain.

Belongs to the DHPS family. In terms of assembly, homodimer.

Functionally, has very low affinity for the DHPS substrate 6-hydroxymethyl-7,8-dihydropterin-pyrophosphate, but can bind the inhibitor dapsone. Seems to lack dihydropteroate synthase activity, and does probably not function in folate metabolism. This is Inactive dihydropteroate synthase 2 (folP2) from Mycobacterium bovis (strain ATCC BAA-935 / AF2122/97).